The primary structure comprises 285 residues: Protein FD (285 aa).

Positions Met-1–Arg-12 are enriched in basic residues. 5 disordered regions span residues Met-1–Ser-59, Asn-79–Phe-107, Leu-115–Ser-134, Ser-198–Gln-236, and Lys-257–Phe-285. Residues Leu-13 to Val-25 show a composition bias toward polar residues. Positions Ser-26 to Ser-50 are enriched in low complexity. Positions His-98–Phe-107 are enriched in polar residues. The 64-residue stretch at Gly-214 to Leu-277 folds into the bZIP domain. The segment at Arg-216–Lys-235 is basic motif. The leucine-zipper stretch occupies residues Leu-242 to Leu-263. The span at Pro-272–Phe-285 shows a compositional bias: polar residues. Position 282 is a phosphothreonine (Thr-282).

This sequence belongs to the bZIP family. As to quaternary structure, self-interacts. Interacts with FT and FDP/BZIP27. Interacts with GRF3 and GRF4, and in a calcium-independent manner, with CPK6 and CPK33. Post-translationally, phosphorylated at Thr-282 in a calcium-dependent manner by CPK6 and CPK33. Highly expressed in shoot apex.

The protein localises to the nucleus. In terms of biological role, transcription factor required for the transition to flowering promoted by FT. This is Protein FD from Arabidopsis thaliana (Mouse-ear cress).